Here is a 204-residue protein sequence, read N- to C-terminus: FMN-dependent NADH:quinone oxidoreductase (204 aa).

Position 9 (serine 9) interacts with FMN.

This sequence belongs to the azoreductase type 1 family. In terms of assembly, homodimer. FMN serves as cofactor.

The catalysed reaction is 2 a quinone + NADH + H(+) = 2 a 1,4-benzosemiquinone + NAD(+). It carries out the reaction N,N-dimethyl-1,4-phenylenediamine + anthranilate + 2 NAD(+) = 2-(4-dimethylaminophenyl)diazenylbenzoate + 2 NADH + 2 H(+). Quinone reductase that provides resistance to thiol-specific stress caused by electrophilic quinones. Its function is as follows. Also exhibits azoreductase activity. Catalyzes the reductive cleavage of the azo bond in aromatic azo compounds to the corresponding amines. This chain is FMN-dependent NADH:quinone oxidoreductase, found in Thiobacillus denitrificans (strain ATCC 25259 / T1).